The following is an 85-amino-acid chain: Small ribosomal subunit protein uS17 (85 aa).

Belongs to the universal ribosomal protein uS17 family. Part of the 30S ribosomal subunit.

Functionally, one of the primary rRNA binding proteins, it binds specifically to the 5'-end of 16S ribosomal RNA. In Anaeromyxobacter dehalogenans (strain 2CP-1 / ATCC BAA-258), this protein is Small ribosomal subunit protein uS17.